The primary structure comprises 89 residues: Small ribosomal subunit protein uS15 (89 aa).

It belongs to the universal ribosomal protein uS15 family. Part of the 30S ribosomal subunit. Forms a bridge to the 50S subunit in the 70S ribosome, contacting the 23S rRNA.

Its function is as follows. One of the primary rRNA binding proteins, it binds directly to 16S rRNA where it helps nucleate assembly of the platform of the 30S subunit by binding and bridging several RNA helices of the 16S rRNA. In terms of biological role, forms an intersubunit bridge (bridge B4) with the 23S rRNA of the 50S subunit in the ribosome. The protein is Small ribosomal subunit protein uS15 of Chelativorans sp. (strain BNC1).